A 651-amino-acid polypeptide reads, in one-letter code: Endoplasmic reticulum chaperone BiP (651 aa).

Positions 1–20 are cleaved as a signal peptide; that stretch reads MGLSTYVGIFLLCILTLSRC. Residues 36-39, lysine 96, 226-228, 292-299, and 363-366 each bind ATP; these read GTTY, GGT, EKAKRTLS, and GSTR. The nucleotide-binding (NBD) stretch occupies residues 125–279; it reads KPYMKVQVGS…KKKEGKDITK (155 aa). The segment at 399-499 is substrate-binding (SBD); the sequence is VQAGVISGVE…PRGLPQIEVT (101 aa). The short motif at 648-651 is the Prevents secretion from ER element; it reads KEEL.

The protein belongs to the heat shock protein 70 family.

The protein resides in the endoplasmic reticulum lumen. The enzyme catalyses ATP + H2O = ADP + phosphate + H(+). The chaperone activity is regulated by ATP-induced allosteric coupling of the nucleotide-binding (NBD) and substrate-binding (SBD) domains. In the ADP-bound and nucleotide-free (apo) states, the two domains have little interaction. In contrast, in the ATP-bound state the two domains are tightly coupled, which results in drastically accelerated kinetics in both binding and release of polypeptide substrates. J domain-containing co-chaperones stimulate the ATPase activity and are required for efficient substrate recognition. Its function is as follows. Endoplasmic reticulum chaperone that plays a key role in protein folding and quality control in the endoplasmic reticulum lumen. Involved in the correct folding of proteins and degradation of misfolded proteins. Acts as a key repressor of the unfolded protein response (UPR). This chain is Endoplasmic reticulum chaperone BiP, found in Echinococcus granulosus (Hydatid tapeworm).